Here is a 532-residue protein sequence, read N- to C-terminus: 2,3-bisphosphoglycerate-independent phosphoglycerate mutase (532 aa).

D15 and S65 together coordinate Mn(2+). S65 (phosphoserine intermediate) is an active-site residue. Substrate contacts are provided by residues H126, 156-157 (RD), R188, R194, 258-261 (RPDR), and K331. The Mn(2+) site is built by D398, H402, D439, H440, and H457.

This sequence belongs to the BPG-independent phosphoglycerate mutase family. In terms of assembly, monomer. Mn(2+) is required as a cofactor.

The enzyme catalyses (2R)-2-phosphoglycerate = (2R)-3-phosphoglycerate. Its pathway is carbohydrate degradation; glycolysis; pyruvate from D-glyceraldehyde 3-phosphate: step 3/5. Catalyzes the interconversion of 2-phosphoglycerate and 3-phosphoglycerate. The sequence is that of 2,3-bisphosphoglycerate-independent phosphoglycerate mutase from Nostoc punctiforme (strain ATCC 29133 / PCC 73102).